The primary structure comprises 37 residues: Diuretic hormone 1 (37 aa).

Belongs to the sauvagine/corticotropin-releasing factor/urotensin I family.

The protein localises to the secreted. In terms of biological role, stimulates fluid secretion by the Malpighian tubules. Increases cyclic AMP production. The sequence is that of Diuretic hormone 1 from Tenebrio molitor (Yellow mealworm beetle).